A 163-amino-acid chain; its full sequence is MQLYPGIIGIKVNKIGEDEIEINSEDEIENLSLKDGIAYVHNSAPLYLKGVNTKYVLPKPLKLLRLGIPTSLENAEQVQVNYLTFFDKDYVLVGFNLTDDFKEPFAILEFDEGYTKVVLKDEFSEVKPKKEKIKKAKRKKKGAKRASKKQKAKSKSARKSRRV.

Residues 128-163 (PKKEKIKKAKRKKKGAKRASKKQKAKSKSARKSRRV) form a disordered region. Residues 129–163 (KKEKIKKAKRKKKGAKRASKKQKAKSKSARKSRRV) show a composition bias toward basic residues.

This is an uncharacterized protein from Sulfurisphaera tokodaii (strain DSM 16993 / JCM 10545 / NBRC 100140 / 7) (Sulfolobus tokodaii).